Consider the following 471-residue polypeptide: Argininosuccinate lyase (471 aa).

This sequence belongs to the lyase 1 family. Argininosuccinate lyase subfamily.

It localises to the cytoplasm. The enzyme catalyses 2-(N(omega)-L-arginino)succinate = fumarate + L-arginine. It participates in amino-acid biosynthesis; L-arginine biosynthesis; L-arginine from L-ornithine and carbamoyl phosphate: step 3/3. The chain is Argininosuccinate lyase from Ralstonia pickettii (strain 12J).